Here is a 29-residue protein sequence, read N- to C-terminus: Cyclotide mech-7 (29 aa).

Positions 1–29 (GIPICGETCTIGTCNTPGCTCSWPVCTRD) form a cross-link, cyclopeptide (Gly-Asp). 3 disulfide bridges follow: cysteine 5–cysteine 19, cysteine 9–cysteine 21, and cysteine 14–cysteine 26.

This is a cyclic peptide. In terms of processing, contains 3 disulfide bonds.

Functionally, probably participates in a plant defense mechanism (Potential). Binds to and induces leakage in phospholipd membranes, particularly ones containing 1-palmitoyl-2-oleophosphatidylethanolamine (POPE). The polypeptide is Cyclotide mech-7 (Melicytus chathamicus (Chatham Island mahoe)).